We begin with the raw amino-acid sequence, 369 residues long: Cytochrome P450 monooxygenase apf8 (369 aa).

Position 303 (C303) interacts with heme.

The protein belongs to the cytochrome P450 family. Heme is required as a cofactor.

It participates in secondary metabolite biosynthesis. In terms of biological role, cytochrome P450 monooxygenase; part of the gene cluster that mediates the biosynthesis of the cyclic tetrapeptide apicidin F (APF). The non-ribosomal peptide synthetase apf1 incorporates four different amino acids to produce apicidin F: L-phenylalanine, D-pipecolic acid (D-pip), N-methoxy-L-tryptophan and L-2-aminooctanedioic acid. L-Phenylalanine is the only proteinogenic amino acid directly used by apf1. The 3 other apf1 substrates are non-proteinogenic and have to be modified by other enzymes of the cluster. Lysine is converted to delta-1-pyrroline-5-carboxylate (P5C) which is reduced to L-pipecolic acid (L-pip) by apf3. L-pip is epimerized to D-pip, probably by apf1 activity, prior to incorporation. L-Tryptophan is N-oxidyzed by one of the cytochrome P450 monooxygenases (apf7 or apf8), and further methylated at the hydroxy group by the O-methyltransferase apf6 to yield N-methoxy-L-tryptophan. The synthesis of the fourth apf1 substrate is more complex. The fatty acid synthase apf5 is involved in the synthesis of the octanoic acid backbone of L-2-aminooctanedioic acid by fixing one acetyl-CoA unit and three malonyl-CoA units. Then one of the cytochrome P450 monooxygenases (apf7 or apf8) may oxidize this backbone to 2-oxooctanoic acid. The aminotransferase apf4 is predicted to catalyze the exchange of the keto group with an amino group. The next step would be the oxidation of 2-aminooctanoic acid by one of the cytochrome P450 monooxygenases (apf7 or apf8). The last step is the oxidation of 2-amino-8-hydroxyoctanoic acid to 2-aminooctanedioic acid is catalyzed by the FAD-dependent monooxygenase apf9. This chain is Cytochrome P450 monooxygenase apf8, found in Gibberella fujikuroi (strain CBS 195.34 / IMI 58289 / NRRL A-6831) (Bakanae and foot rot disease fungus).